A 719-amino-acid chain; its full sequence is Fusicoccadiene synthase (719 aa).

The tract at residues 1-334 (MEFKYSEVVE…RYNPDVSFNK (334 aa)) is fusicocca-2,10(14)-diene synthase. Residues Asp-92 and Asp-96 each coordinate Mg(2+). The geranylgeranyl diphosphate synthase stretch occupies residues 335–719 (TQLEWMRQGL…MRLLLELLRV (385 aa)). Positions 358–404 (EIDSDESAVSPTADESDSTEDSLGSGSRQDSSLSTGLSLSPVHSNEG) are disordered. The span at 378 to 400 (DSLGSGSRQDSSLSTGLSLSPVH) shows a compositional bias: polar residues. Lys-435, Arg-438, and His-467 together coordinate isopentenyl diphosphate. Residues Asp-474 and Asp-478 each contribute to the Mg(2+) site. Residue Arg-483 coordinates dimethylallyl diphosphate. Residue Arg-484 participates in isopentenyl diphosphate binding. Residues Lys-561, Thr-562, Gln-602, Asn-609, Lys-619, and Lys-629 each coordinate dimethylallyl diphosphate.

This sequence in the N-terminal section; belongs to the terpene synthase family. The protein in the C-terminal section; belongs to the FPP/GGPP synthase family. As to quaternary structure, hexamer.

The catalysed reaction is geranylgeranyl diphosphate = fusicocca-2,10(14)-diene + diphosphate. It carries out the reaction isopentenyl diphosphate + (2E,6E)-farnesyl diphosphate = (2E,6E,10E)-geranylgeranyl diphosphate + diphosphate. It functions in the pathway mycotoxin biosynthesis. Functionally, multifunctional diterpene synthase; part of the 2 gene clusters that mediate the biosynthesis of fusicoccins, diterpene glucosides that display phytohormone-like activity and function as potent activators of plasma membrane H(+)-ATPases in plants by modifying 14-3-3 proteins and cause the plant disease constriction canker. The first step in the pathway is performed by the fusicoccadiene synthase PaFS that possesses both prenyl transferase and terpene cyclase activity, converting isopentenyl diphosphate and dimethylallyl diphosphate into geranylgeranyl diphosphate (GGDP) and successively converting GGDP into fusicocca-2,10(14)-diene, a precursor for fusicoccin H. Fusicoccadiene synthase is an allosteric enzyme for GGPP cyclization that generates 64% fusicoccadiene, 9% delta-araneosene, and one additional unidentified diterpene product, when incubated with GGPP. In the absence of isopentenyl diphosphate (IPP), PaFS can also solvolyze the shorter chain geranyl diphosphate (GPP) and farnesyl diphosphate (FPP) as alternative substrates to yield predominantly acyclic products. FPP is converted to farnesol (60.5%), nerolidol (14.0%), and farnesene (14.0%), while GPP is converted to a mixture of geraniol (59.5%) and linalool (35.0%). The second step is the oxidation at the C-8 position by the cytochrome P450 monooxygenase PaP450-2 to yield fusicocca-2,10(14)-diene-8-beta-ol. The cytochrome P450 monooxygenase PaP450-1 then catalyzes the hydroxylation at the C-16 position to produce fusicocca-2,10(14)-diene-8-beta,16-diol. The dioxygenase fc-dox then catalyzes the 16-oxydation of fusicocca-2,10(14)-diene-8-beta,16-diol to yield an aldehyde (8-beta-hydroxyfusicocca-1,10(14)-dien-16-al). The short-chain dehydrogenase/reductase fc-sdr catalyzes the reduction of the aldehyde to yield fusicocca-1,10(14)-diene-8-beta,16-diol. The next step is the hydroxylation at C-9 performed by the cytochrome P450 monooxygenase PaP450-3 that leads to fusicoccin H aglycon which is glycosylated to fusicoccin H by the O-glycosyltransferase PAGT. Hydroxylation at C-12 by the cytochrome P450 monooxygenase PaP450-4 leads then to the production of fusicoccin Q and is followed by methylation by the O-methyltransferase PAMT to yield fusicoccin P. Fusicoccin P is further converted to fusicoccin J via prenylation by the O-glucose prenyltransferase PaPT. Cytochrome P450 monooxygenase PaP450-5 then performs hydroxylation at C-19 to yield dideacetyl-fusicoccin A which is acetylated to 3'-O-deacetyl-fusicoccin A by the O-acetyltransferase PaAT-2. Finally, a another acetylation by the O-acetyltransferase PaAT-1 yields fusicoccin A. The protein is Fusicoccadiene synthase of Phomopsis amygdali (Fusicoccum amygdali).